A 93-amino-acid chain; its full sequence is Auxin-responsive protein SAUR26 (93 aa).

This sequence belongs to the ARG7 family. In terms of assembly, interacts with PP2C-D1. In terms of tissue distribution, higher expression in thermo-responsive cultivars (e.g. cv. Alst-1, cv. Ang-0 and cv. Com-0) than in low thermo-responsive cultivars (e.g. cv. Dja-1, cv. El-0 and cv. Kon).

The protein resides in the cell membrane. Provide a mechanistic link between auxin and plasma membrane H(+)-ATPases (PM H(+)-ATPases, e.g. AHA1 and AHA2), and triggers PM H(+)-ATPases activity by promoting phosphorylation of their C-terminal autoinhibitory domain as a result of PP2C-D subfamily of type 2C phosphatases inhibition, thus leading to the acidification of the apoplast and the facilitation of solutes and water uptake to drive cell expansion. Functions as a positive effectors of cell expansion through modulation of auxin transport. Involved in thermo-responsiveness of plant architecture. Enhances plasma membrane H(+)-ATPase. Probably involved in light intensity mediated root development. The protein is Auxin-responsive protein SAUR26 of Arabidopsis thaliana (Mouse-ear cress).